We begin with the raw amino-acid sequence, 487 residues long: N-succinylglutamate 5-semialdehyde dehydrogenase (487 aa).

221–226 (GSSDTG) lines the NAD(+) pocket. Residues Glu-244 and Cys-278 contribute to the active site.

Belongs to the aldehyde dehydrogenase family. AstD subfamily.

It catalyses the reaction N-succinyl-L-glutamate 5-semialdehyde + NAD(+) + H2O = N-succinyl-L-glutamate + NADH + 2 H(+). Its pathway is amino-acid degradation; L-arginine degradation via AST pathway; L-glutamate and succinate from L-arginine: step 4/5. Functionally, catalyzes the NAD-dependent reduction of succinylglutamate semialdehyde into succinylglutamate. The chain is N-succinylglutamate 5-semialdehyde dehydrogenase from Burkholderia cenocepacia (strain ATCC BAA-245 / DSM 16553 / LMG 16656 / NCTC 13227 / J2315 / CF5610) (Burkholderia cepacia (strain J2315)).